A 308-amino-acid polypeptide reads, in one-letter code: Glutaminase (308 aa).

Substrate is bound by residues S66, N117, E161, N168, Y192, Y244, and V262.

The protein belongs to the glutaminase family. Homotetramer.

It catalyses the reaction L-glutamine + H2O = L-glutamate + NH4(+). This chain is Glutaminase, found in Klebsiella pneumoniae (strain 342).